Reading from the N-terminus, the 77-residue chain is Acyl carrier protein (77 aa).

The 76-residue stretch at 2–77 (ASIEKRIKEI…DAIDYITDHT (76 aa)) folds into the Carrier domain. S37 is subject to O-(pantetheine 4'-phosphoryl)serine.

It belongs to the acyl carrier protein (ACP) family. Post-translationally, 4'-phosphopantetheine is transferred from CoA to a specific serine of apo-ACP by AcpS. This modification is essential for activity because fatty acids are bound in thioester linkage to the sulfhydryl of the prosthetic group.

It localises to the cytoplasm. It participates in lipid metabolism; fatty acid biosynthesis. Its function is as follows. Carrier of the growing fatty acid chain in fatty acid biosynthesis. The sequence is that of Acyl carrier protein from Geobacter sp. (strain M21).